A 350-amino-acid polypeptide reads, in one-letter code: Ketol-acid reductoisomerase (NADP(+)) (350 aa).

The region spanning 4 to 187 (VSITTDYSRM…GGARANIIKT (184 aa)) is the KARI N-terminal Rossmann domain. NADP(+)-binding positions include 30 to 33 (YGSQ), R53, T58, and 88 to 91 (DMVQ). The active site involves H113. G139 lines the NADP(+) pocket. The 146-residue stretch at 188 to 333 (TFKEETETDL…KQLRAKMVWL (146 aa)) folds into the KARI C-terminal knotted domain. Residues D196, E200, E232, and E236 each coordinate Mg(2+). Position 257 (S257) interacts with substrate.

It belongs to the ketol-acid reductoisomerase family. Mg(2+) is required as a cofactor.

It carries out the reaction (2R)-2,3-dihydroxy-3-methylbutanoate + NADP(+) = (2S)-2-acetolactate + NADPH + H(+). It catalyses the reaction (2R,3R)-2,3-dihydroxy-3-methylpentanoate + NADP(+) = (S)-2-ethyl-2-hydroxy-3-oxobutanoate + NADPH + H(+). The protein operates within amino-acid biosynthesis; L-isoleucine biosynthesis; L-isoleucine from 2-oxobutanoate: step 2/4. It participates in amino-acid biosynthesis; L-valine biosynthesis; L-valine from pyruvate: step 2/4. In terms of biological role, involved in the biosynthesis of branched-chain amino acids (BCAA). Catalyzes an alkyl-migration followed by a ketol-acid reduction of (S)-2-acetolactate (S2AL) to yield (R)-2,3-dihydroxy-isovalerate. In the isomerase reaction, S2AL is rearranged via a Mg-dependent methyl migration to produce 3-hydroxy-3-methyl-2-ketobutyrate (HMKB). In the reductase reaction, this 2-ketoacid undergoes a metal-dependent reduction by NADPH to yield (R)-2,3-dihydroxy-isovalerate. The polypeptide is Ketol-acid reductoisomerase (NADP(+)) (Xylella fastidiosa (strain 9a5c)).